A 266-amino-acid chain; its full sequence is Hydroxyethylthiazole kinase (266 aa).

Substrate is bound at residue methionine 45. Lysine 121 and serine 167 together coordinate ATP. Glycine 194 lines the substrate pocket.

Belongs to the Thz kinase family. Mg(2+) serves as cofactor.

The enzyme catalyses 5-(2-hydroxyethyl)-4-methylthiazole + ATP = 4-methyl-5-(2-phosphooxyethyl)-thiazole + ADP + H(+). Its pathway is cofactor biosynthesis; thiamine diphosphate biosynthesis; 4-methyl-5-(2-phosphoethyl)-thiazole from 5-(2-hydroxyethyl)-4-methylthiazole: step 1/1. Functionally, catalyzes the phosphorylation of the hydroxyl group of 4-methyl-5-beta-hydroxyethylthiazole (THZ). The protein is Hydroxyethylthiazole kinase of Methanocella arvoryzae (strain DSM 22066 / NBRC 105507 / MRE50).